The primary structure comprises 395 residues: Phosphoglycerate kinase (395 aa).

Substrate-binding positions include 21–23 (DFN), arginine 36, 59–62 (HLGR), arginine 120, and arginine 153. Residues lysine 203, glutamate 325, and 351–354 (GGDS) each bind ATP.

The protein belongs to the phosphoglycerate kinase family. As to quaternary structure, monomer.

It localises to the cytoplasm. It catalyses the reaction (2R)-3-phosphoglycerate + ATP = (2R)-3-phospho-glyceroyl phosphate + ADP. Its pathway is carbohydrate degradation; glycolysis; pyruvate from D-glyceraldehyde 3-phosphate: step 2/5. The chain is Phosphoglycerate kinase from Roseiflexus sp. (strain RS-1).